Consider the following 412-residue polypeptide: AA9 family lytic polysaccharide monooxygenase A (412 aa).

The first 20 residues, 1-20, serve as a signal peptide directing secretion; that stretch reads MKTTTYSLLALAAASKLASA. Cu(2+) is bound by residues H21 and H103. A disulfide bridge links C63 with C186. N151 carries N-linked (GlcNAc...) asparagine glycosylation. H172 provides a ligand contact to O2. Position 183 (Y183) interacts with Cu(2+). N-linked (GlcNAc...) asparagine glycosylation is found at N334 and N385. In terms of domain architecture, CBM1 spans 373-409; the sequence is GVAKMYERCGGINHTGPTTCESGSVCKKWNPYYYQCV.

This sequence belongs to the polysaccharide monooxygenase AA9 family. Cu(2+) is required as a cofactor.

It is found in the secreted. It carries out the reaction [(1-&gt;4)-beta-D-glucosyl]n+m + reduced acceptor + O2 = 4-dehydro-beta-D-glucosyl-[(1-&gt;4)-beta-D-glucosyl]n-1 + [(1-&gt;4)-beta-D-glucosyl]m + acceptor + H2O.. Lytic polysaccharide monooxygenase (LPMO) that depolymerizes crystalline and amorphous polysaccharides via the oxidation of scissile alpha- or beta-(1-4)-glycosidic bonds, yielding C4 oxidation products. Catalysis by LPMOs requires the reduction of the active-site copper from Cu(II) to Cu(I) by a reducing agent and H(2)O(2) or O(2) as a cosubstrate. The polypeptide is AA9 family lytic polysaccharide monooxygenase A (eglD) (Aspergillus niger (strain ATCC MYA-4892 / CBS 513.88 / FGSC A1513)).